The sequence spans 596 residues: Elongation factor 4 (596 aa).

The 183-residue stretch at 2–184 (SHIRNFSIIA…RLVHTIPAPE (183 aa)) folds into the tr-type G domain. Residues 14-19 (DHGKST) and 131-134 (NKMD) contribute to the GTP site.

Belongs to the TRAFAC class translation factor GTPase superfamily. Classic translation factor GTPase family. LepA subfamily.

It localises to the cell inner membrane. It catalyses the reaction GTP + H2O = GDP + phosphate + H(+). Required for accurate and efficient protein synthesis under certain stress conditions. May act as a fidelity factor of the translation reaction, by catalyzing a one-codon backward translocation of tRNAs on improperly translocated ribosomes. Back-translocation proceeds from a post-translocation (POST) complex to a pre-translocation (PRE) complex, thus giving elongation factor G a second chance to translocate the tRNAs correctly. Binds to ribosomes in a GTP-dependent manner. In Pseudomonas putida (strain GB-1), this protein is Elongation factor 4.